The primary structure comprises 289 residues: Rhomboid-type serine protease 2 (289 aa).

6 helical membrane-spanning segments follow: residues 26–46, 67–87, 100–120, 122–142, 157–179, and 184–203; these read VVII…VDIQ, FPFI…LTPL, CLAL…IGLE, FVFG…LLLG, IGTY…AVLV, and FWGH…SSTL. Ser-134 functions as the Nucleophile in the catalytic mechanism. The active site involves His-187.

The protein belongs to the peptidase S54 family.

The protein resides in the golgi apparatus membrane. The protein localises to the golgi apparatus. Its subcellular location is the cis-Golgi network membrane. It carries out the reaction Cleaves type-1 transmembrane domains using a catalytic dyad composed of serine and histidine that are contributed by different transmembrane domains.. Functionally, probable rhomboid-type serine protease that catalyzes intramembrane proteolysis. The sequence is that of Rhomboid-type serine protease 2 (RBD2) from Podospora anserina (Pleurage anserina).